The sequence spans 172 residues: Peptide deformylase (172 aa).

The Fe cation site is built by cysteine 92 and histidine 134. Residue glutamate 135 is part of the active site. Histidine 138 is a binding site for Fe cation.

This sequence belongs to the polypeptide deformylase family. The cofactor is Fe(2+).

The enzyme catalyses N-terminal N-formyl-L-methionyl-[peptide] + H2O = N-terminal L-methionyl-[peptide] + formate. Its function is as follows. Removes the formyl group from the N-terminal Met of newly synthesized proteins. Requires at least a dipeptide for an efficient rate of reaction. N-terminal L-methionine is a prerequisite for activity but the enzyme has broad specificity at other positions. The sequence is that of Peptide deformylase from Saccharophagus degradans (strain 2-40 / ATCC 43961 / DSM 17024).